The following is a 107-amino-acid chain: Iron-binding protein IscA (107 aa).

3 residues coordinate Fe cation: Cys-35, Cys-99, and Cys-101.

The protein belongs to the HesB/IscA family. In terms of assembly, homodimer; may form tetramers and higher multimers. Fe cation serves as cofactor.

In terms of biological role, is able to transfer iron-sulfur clusters to apo-ferredoxin. Multiple cycles of [2Fe2S] cluster formation and transfer are observed, suggesting that IscA acts catalytically. Recruits intracellular free iron so as to provide iron for the assembly of transient iron-sulfur cluster in IscU in the presence of IscS, L-cysteine and the thioredoxin reductase system TrxA/TrxB. In Yersinia pestis bv. Antiqua (strain Angola), this protein is Iron-binding protein IscA.